Reading from the N-terminus, the 288-residue chain is Damage-control phosphatase AF_1104 (288 aa).

The short motif at 7–10 (CPSC) is the Subfamily I CxxC motif element. Asp-160, Asn-161, and Asp-194 together coordinate Mn(2+). Positions 247–250 (ANYE) match the Subfamily I GNFE-like motif motif. A Subfamily I KC motif motif is present at residues 267–268 (KC).

It belongs to the damage-control phosphatase family. Nucleotides phosphatase I subfamily. It depends on [2Fe-2S] cluster as a cofactor. Requires Mn(2+) as cofactor. The cofactor is Ni(2+).

In terms of biological role, metal-dependent phosphatase with probable damage-control functions. Could hydrolyze oxidatively damaged purine nucleotides or their biosynthetic intermediates. The sequence is that of Damage-control phosphatase AF_1104 from Archaeoglobus fulgidus (strain ATCC 49558 / DSM 4304 / JCM 9628 / NBRC 100126 / VC-16).